Here is a 445-residue protein sequence, read N- to C-terminus: Argininosuccinate synthase (445 aa).

Residues 17-25 (AFSGGLDTS) and alanine 43 each bind ATP. Position 99 (tyrosine 99) interacts with L-citrulline. The ATP site is built by glycine 129 and threonine 131. L-aspartate-binding residues include threonine 131, asparagine 135, and aspartate 136. An L-citrulline-binding site is contributed by asparagine 135. Residue aspartate 136 coordinates ATP. Residues arginine 139 and serine 192 each contribute to the L-citrulline site. Residue aspartate 194 coordinates ATP. The L-citrulline site is built by threonine 201, glutamate 203, and glutamate 280.

This sequence belongs to the argininosuccinate synthase family. Type 2 subfamily. Homotetramer.

It is found in the cytoplasm. The catalysed reaction is L-citrulline + L-aspartate + ATP = 2-(N(omega)-L-arginino)succinate + AMP + diphosphate + H(+). It functions in the pathway amino-acid biosynthesis; L-arginine biosynthesis; L-arginine from L-ornithine and carbamoyl phosphate: step 2/3. The protein is Argininosuccinate synthase of Rhodopseudomonas palustris (strain ATCC BAA-98 / CGA009).